The primary structure comprises 181 residues: MTTDTHTLHIEEILDLLPHRFPFLLVDRVLDFEEGKFLRAVKNVSFNEPFFQGHFPGKPIFPGVLILEAMAQATGILAFKSRGKLEPGELYYFAGIDEARFKRPVVPGDQMIMEVEFVKERRGLTRFTGVAKVDGEIVCTATMMCARSKPAAPAESVVVKPDVVKPDVVKPDVVNPVVKES.

Histidine 54 is a catalytic residue.

It belongs to the thioester dehydratase family. FabZ subfamily.

Its subcellular location is the cytoplasm. The enzyme catalyses a (3R)-hydroxyacyl-[ACP] = a (2E)-enoyl-[ACP] + H2O. In terms of biological role, involved in unsaturated fatty acids biosynthesis. Catalyzes the dehydration of short chain beta-hydroxyacyl-ACPs and long chain saturated and unsaturated beta-hydroxyacyl-ACPs. In Yersinia pestis, this protein is 3-hydroxyacyl-[acyl-carrier-protein] dehydratase FabZ.